The sequence spans 528 residues: GMP synthase [glutamine-hydrolyzing] (528 aa).

The Glutamine amidotransferase type-1 domain occupies 13–204; it reads AIVILDFGSQ…VYHVCGCDPD (192 aa). The active-site Nucleophile is C90. Catalysis depends on residues H178 and E180. The region spanning 205–403 is the GMPS ATP-PPase domain; the sequence is WTTAAFIDEA…LGLPEEIVRR (199 aa). 232–238 is a binding site for ATP; that stretch reads SGGVDSS.

Homodimer.

It carries out the reaction XMP + L-glutamine + ATP + H2O = GMP + L-glutamate + AMP + diphosphate + 2 H(+). Its pathway is purine metabolism; GMP biosynthesis; GMP from XMP (L-Gln route): step 1/1. In terms of biological role, catalyzes the synthesis of GMP from XMP. The chain is GMP synthase [glutamine-hydrolyzing] from Synechococcus sp. (strain CC9605).